The following is a 409-amino-acid chain: Na(+)-translocating NADH-quinone reductase subunit F (409 aa).

A helical membrane pass occupies residues 5-25 (FIFGIGAFTAIVLVLAVVILI). A 2Fe-2S ferredoxin-type domain is found at 34–128 (GDITISINND…SMDVELPEEV (95 aa)). Residues Cys-71, Cys-77, Cys-80, and Cys-112 each coordinate [2Fe-2S] cluster. The region spanning 131–271 (VKKWECTVIS…SGPFGEFFAK (141 aa)) is the FAD-binding FR-type domain.

The protein belongs to the NqrF family. As to quaternary structure, composed of six subunits; NqrA, NqrB, NqrC, NqrD, NqrE and NqrF. [2Fe-2S] cluster is required as a cofactor. The cofactor is FAD.

The protein localises to the cell inner membrane. The enzyme catalyses a ubiquinone + n Na(+)(in) + NADH + H(+) = a ubiquinol + n Na(+)(out) + NAD(+). Its function is as follows. NQR complex catalyzes the reduction of ubiquinone-1 to ubiquinol by two successive reactions, coupled with the transport of Na(+) ions from the cytoplasm to the periplasm. The first step is catalyzed by NqrF, which accepts electrons from NADH and reduces ubiquinone-1 to ubisemiquinone by a one-electron transfer pathway. This chain is Na(+)-translocating NADH-quinone reductase subunit F, found in Mannheimia succiniciproducens (strain KCTC 0769BP / MBEL55E).